The following is a 172-amino-acid chain: Small ribosomal subunit protein uS5 (172 aa).

Positions 17 to 80 constitute an S5 DRBM domain; the sequence is LREKMISVNR…EQARRNMFKV (64 aa).

The protein belongs to the universal ribosomal protein uS5 family. As to quaternary structure, part of the 30S ribosomal subunit. Contacts proteins S4 and S8.

With S4 and S12 plays an important role in translational accuracy. Its function is as follows. Located at the back of the 30S subunit body where it stabilizes the conformation of the head with respect to the body. This is Small ribosomal subunit protein uS5 from Paraburkholderia phymatum (strain DSM 17167 / CIP 108236 / LMG 21445 / STM815) (Burkholderia phymatum).